A 474-amino-acid chain; its full sequence is Transmembrane transporter FVEG_12640 (474 aa).

Over residues 1–15 (MASPTISSMEQYTPS) the composition is skewed to polar residues. A disordered region spans residues 1 to 39 (MASPTISSMEQYTPSSKDEKIVPLHGDAAGSDTEKGESR). A run of 10 helical transmembrane segments spans residues 72-92 (ILAI…LCIV), 133-153 (LVGV…IVTS), 164-184 (GTCT…FSSI), 192-212 (WLTW…VVAV), 231-251 (WAPI…NIFI), 275-295 (ACLV…LVIY), 317-337 (VAYG…QHVA), 364-384 (LGIN…VPIL), 387-407 (LLGL…PALL), and 431-451 (LIMI…AVLI).

This sequence belongs to the amino acid/polyamine transporter 2 family.

Its subcellular location is the membrane. Its function is as follows. Transmembrane transporter; part of the Fusarium detoxification of benzoxazolinone cluster 2 (FDB2) involved in the degradation of benzoxazolinones produced by the host plant. Maize, wheat, and rye produce the 2 benzoxazinone phytoanticipins 2,4-dihy-droxy-7-methoxy-1,4-benzoxazin-3-one (DIMBOA) and 2,4-dihydroxy-1,4-benzoxazin-3-one (DIBOA) that, due to their inherent instability once released, spontaneously degrade to the more stable corresponding benzoxazolinones, 6-methoxy-2-benzoxazolinone (MBOA) and 2-benzoxazolinone (BOA), respectively. Might be involved in the transport of metabolites of benzoxazolinone degradation. The chain is Transmembrane transporter FVEG_12640 from Gibberella moniliformis (strain M3125 / FGSC 7600) (Maize ear and stalk rot fungus).